Consider the following 107-residue polypeptide: Keratin, type I cytoskeletal 20 (107 aa).

Residues 1–7 (GNLWVGN) form a head region. The tract at residues 8-43 (EKMTMKNLNDRLASYLEKVRSLEQSNSKFELQIKQW) is coil 1A. Residues 8–107 (EKMTMKNLND…ETERGIRLAV (100 aa)) form the IF rod domain. The tract at residues 44 to 61 (YESNTPGISRDHSAYLQQ) is linker 1. Residues 62–107 (IQDLRNQIRDAQLQNARCVLQIDNAKLAAEDFRLKYETERGIRLAV) form a coil 1B region.

It belongs to the intermediate filament family. In terms of assembly, heterotetramer of two type I and two type II keratins. Associates with KRT8.

In terms of biological role, plays a significant role in maintaining keratin filament organization in intestinal epithelia. When phosphorylated, plays a role in the secretion of mucin in the small intestine. This Sus scrofa (Pig) protein is Keratin, type I cytoskeletal 20.